Here is a 391-residue protein sequence, read N- to C-terminus: Leucine-rich repeat-containing protein 74B (391 aa).

The disordered stretch occupies residues 1-38 (MKGPCEVQKNEDQEGEAAATGPQAETLEAERSWTADSH). Positions 28 to 38 (EAERSWTADSH) are enriched in basic and acidic residues. 9 LRR repeats span residues 106 to 126 (YIKR…EALA), 134 to 154 (IISD…QAIC), 162 to 182 (TVEK…QHLA), 190 to 211 (GLKS…ILGP), 218 to 239 (GLTE…AFAR), 246 to 259 (FLKV…GFGD), 274 to 294 (VLEE…LKLG), 302 to 323 (TLRI…GLLK), and 332 to 354 (ALEL…ASSM). The segment at 371-391 (KDWPQASTPSQPASAPSDSGL) is disordered. Residues 374–391 (PQASTPSQPASAPSDSGL) are compositionally biased toward low complexity.

This chain is Leucine-rich repeat-containing protein 74B, found in Mus musculus (Mouse).